The following is a 617-amino-acid chain: V-type proton ATPase catalytic subunit A (617 aa).

A Phosphothreonine modification is found at threonine 136. Residue 250–257 coordinates ATP; it reads GAFGCGKT. Residue serine 384 is modified to Phosphoserine; by AMPK.

The protein belongs to the ATPase alpha/beta chains family. V-ATPase is a heteromultimeric enzyme made up of two complexes: the ATP-hydrolytic V1 complex and the proton translocation V0 complex. The V1 complex consists of three catalytic AB heterodimers that form a heterohexamer, three peripheral stalks each consisting of EG heterodimers, one central rotor including subunits D and F, and the regulatory subunits C and H. The proton translocation complex V0 consists of the proton transport subunit a, a ring of proteolipid subunits c9c'', rotary subunit d, subunits e and f, and the accessory subunits ATP6AP1/Ac45 and ATP6AP2/PRR. Interacts with the V0 complex V-ATPase subunit a4 ATP6V0A4. Interacts with WFS1. Interacts with alpha-crystallin B chain/CRYAB and with MTOR, forming a ternary complex. Phosphorylation at Ser-384 by AMPK down-regulates its enzyme activity.

It localises to the cytoplasm. It is found in the cytosol. The protein resides in the cytoplasmic vesicle. Its subcellular location is the secretory vesicle. The protein localises to the clathrin-coated vesicle membrane. It localises to the lysosome. It carries out the reaction ATP + H2O + 4 H(+)(in) = ADP + phosphate + 5 H(+)(out). ATP hydrolysis occurs at the interface between the nucleotide-binding domains of subunits A and B. ATP hydrolysis triggers a conformational change in the subunits D and F, which induces a shift of subunit d. The c-ring is subsequently rotated and results in a continuous proton translocation across the membrane. Functionally, catalytic subunit of the V1 complex of vacuolar(H+)-ATPase (V-ATPase), a multisubunit enzyme composed of a peripheral complex (V1) that hydrolyzes ATP and a membrane integral complex (V0) that translocates protons. V-ATPase is responsible for acidifying and maintaining the pH of intracellular compartments and in some cell types, is targeted to the plasma membrane, where it is responsible for acidifying the extracellular environment. In aerobic conditions, involved in intracellular iron homeostasis, thus triggering the activity of Fe(2+) prolyl hydroxylase (PHD) enzymes, and leading to HIF1A hydroxylation and subsequent proteasomal degradation. May play a role in neurite development and synaptic connectivity. This is V-type proton ATPase catalytic subunit A (ATP6V1A) from Pongo abelii (Sumatran orangutan).